Here is a 662-residue protein sequence, read N- to C-terminus: Protein transport Sec1b (662 aa).

It belongs to the STXBP/unc-18/SEC1 family.

Its function is as follows. Involved in the vesicle trafficking. Binds syntaxins. This is Protein transport Sec1b (SEC1B) from Arabidopsis thaliana (Mouse-ear cress).